A 127-amino-acid chain; its full sequence is Large ribosomal subunit protein uL22 (127 aa).

It belongs to the universal ribosomal protein uL22 family. As to quaternary structure, part of the 50S ribosomal subunit.

Functionally, this protein binds specifically to 23S rRNA; its binding is stimulated by other ribosomal proteins, e.g. L4, L17, and L20. It is important during the early stages of 50S assembly. It makes multiple contacts with different domains of the 23S rRNA in the assembled 50S subunit and ribosome. The globular domain of the protein is located near the polypeptide exit tunnel on the outside of the subunit, while an extended beta-hairpin is found that lines the wall of the exit tunnel in the center of the 70S ribosome. The protein is Large ribosomal subunit protein uL22 of Methylobacterium nodulans (strain LMG 21967 / CNCM I-2342 / ORS 2060).